The following is a 438-amino-acid chain: Death-associated inhibitor of apoptosis 1 (438 aa).

The stretch at 44 to 110 (EETRLKTFTD…QRWSPNCPLL (67 aa)) is one BIR 1 repeat. The interval 194–213 (TATQATGDVQPETCRPSAAS) is disordered. The BIR 2 repeat unit spans residues 226 to 293 (ETARLRTFEA…ALWLSQCRFV (68 aa)). Residues Cys263, Cys266, His283, and Cys290 each coordinate Zn(2+). Residues 322–346 (GGVAVASTQASEEEQQTSLSSEEAV) form a disordered region. Positions 327-345 (ASTQASEEEQQTSLSSEEA) are enriched in low complexity. The RING-type zinc-finger motif lies at 391-426 (CKICYGAEYNTAFLPCGHVVACAKCASSVTKCPLCR).

Belongs to the IAP family. As to quaternary structure, interacts (via BIR 2 domain) with Dronc (via residues 114-125). Rpr, hid and grim can outcompete Dronc for binding Diap1 therefore removing Diap1-mediated ubiquitination. Interacts (via BIR 2 domain) with HtrA2; this displaces any bound Dronc. Interacts with Strica. The N-terminally cleaved form interacts with Ubr3 (via UBR-type zinc finger); the interaction promotes the recruitment and uniquitination of substrate capases such as Dronc. In terms of processing, ubiquitinated and degraded by HtrA2 in apoptotic cells; proteolytic cleavage at specific sites in the BIR domain linker region generating inactive fragments. Mutation of one site reduces but does not abolish cleavage as another site is selected by the protease.

The catalysed reaction is S-ubiquitinyl-[E2 ubiquitin-conjugating enzyme]-L-cysteine + [acceptor protein]-L-lysine = [E2 ubiquitin-conjugating enzyme]-L-cysteine + N(6)-ubiquitinyl-[acceptor protein]-L-lysine.. In terms of biological role, anti-apoptotic protein which functions as a caspase regulator, using its E3 ubiquitin-protein ligase activity to smother caspase activity. Binds, ubiquitinates and inactivates initiator caspase Dronc, and effector caspases Drice and Dcp-1. Acts as a Nedd8-E3 ubiquitin-protein ligase for Drice. Suppresses apoptosis by targeting the apoptosome for ubiquitination and inactivation. Plays an important role in cell motility. Overexpression suppresses rpr and hid-dependent cell death in the eye. Interaction of Diap1 with Dronc is required to suppress Dronc-mediated cell death through Diap1-mediated ubiquitination of Dronc. Acts as a positive regulator of Wnt signaling. This Drosophila melanogaster (Fruit fly) protein is Death-associated inhibitor of apoptosis 1 (Diap1).